A 658-amino-acid polypeptide reads, in one-letter code: tRNA uridine 5-carboxymethylaminomethyl modification enzyme MnmG (658 aa).

13-18 is a binding site for FAD; the sequence is GAGHAG. 285-299 is a binding site for NAD(+); it reads GPRYCPSVEDKINRF.

It belongs to the MnmG family. Homodimer. Heterotetramer of two MnmE and two MnmG subunits. It depends on FAD as a cofactor.

It localises to the cytoplasm. In terms of biological role, NAD-binding protein involved in the addition of a carboxymethylaminomethyl (cmnm) group at the wobble position (U34) of certain tRNAs, forming tRNA-cmnm(5)s(2)U34. The polypeptide is tRNA uridine 5-carboxymethylaminomethyl modification enzyme MnmG (Verminephrobacter eiseniae (strain EF01-2)).